We begin with the raw amino-acid sequence, 339 residues long: Terpene synthase 7 (339 aa).

The DDxx(x)D/E motif motif lies at 79–84 (DDFLES). The NDxxSxxxD/E motif signature appears at 219-227 (NDCASYAKE).

Belongs to the terpene synthase family.

It catalyses the reaction (2E,6E)-farnesyl diphosphate = (-)-beta-barbatene + diphosphate. Its function is as follows. Terpene synthase that converts its substrate farnesyl diphosphate (FPP) into the sesquiterpene beta-barbatene. This is Terpene synthase 7 from Dictyostelium discoideum (Social amoeba).